The primary structure comprises 1510 residues: Chromosome partition protein MukB (1510 aa).

Positions 6 to 30 (ELENEIELESDEVIMENENVEEIVD) form a coiled coil. ATP is bound at residue 75–82 (GGNGAGKS). Coiled-coil stretches lie at residues 346–506 (QHRL…HKMS), 553–633 (QQTP…NLTA), 673–706 (MQSQ…RLSQ), 821–847 (RAAR…QIAF), 876–1064 (EELM…IQLQ), 1094–1149 (ERAR…RELV), and 1249–1305 (DAIE…QNIS). A flexible hinge region spans residues 707–824 (PDGSEDPRLN…EIPLFGRAAR (118 aa)).

This sequence belongs to the SMC family. MukB subfamily. As to quaternary structure, homodimerization via its hinge domain. Binds to DNA via its C-terminal region. Interacts, and probably forms a ternary complex, with MukE and MukF via its C-terminal region. The complex formation is stimulated by calcium or magnesium. Interacts with tubulin-related protein FtsZ.

The protein resides in the cytoplasm. Its subcellular location is the nucleoid. In terms of biological role, plays a central role in chromosome condensation, segregation and cell cycle progression. Functions as a homodimer, which is essential for chromosome partition. Involved in negative DNA supercoiling in vivo, and by this means organize and compact chromosomes. May achieve or facilitate chromosome segregation by condensation DNA from both sides of a centrally located replisome during cell division. This is Chromosome partition protein MukB from Haemophilus influenzae (strain 86-028NP).